A 628-amino-acid polypeptide reads, in one-letter code: tRNA uridine 5-carboxymethylaminomethyl modification enzyme MnmG (628 aa).

FAD contacts are provided by residues glycine 11–glycine 16, valine 123, and serine 178. Residue glycine 271 to phenylalanine 285 coordinates NAD(+). Position 368 (glutamine 368) interacts with FAD.

Belongs to the MnmG family. As to quaternary structure, homodimer. Heterotetramer of two MnmE and two MnmG subunits. The cofactor is FAD.

The protein localises to the cytoplasm. Functionally, NAD-binding protein involved in the addition of a carboxymethylaminomethyl (cmnm) group at the wobble position (U34) of certain tRNAs, forming tRNA-cmnm(5)s(2)U34. This is tRNA uridine 5-carboxymethylaminomethyl modification enzyme MnmG from Bacteroides thetaiotaomicron (strain ATCC 29148 / DSM 2079 / JCM 5827 / CCUG 10774 / NCTC 10582 / VPI-5482 / E50).